A 96-amino-acid polypeptide reads, in one-letter code: Large ribosomal subunit protein uL23cz (96 aa).

This sequence belongs to the universal ribosomal protein uL23 family. In terms of assembly, part of the 50S ribosomal subunit.

It localises to the plastid. Its subcellular location is the chloroplast. Functionally, binds to 23S rRNA. This is Large ribosomal subunit protein uL23cz (rpl23-A) from Sorghum bicolor (Sorghum).